Reading from the N-terminus, the 249-residue chain is L-fucose operon activator (249 aa).

Residues 1-56 (MNYRDELILQWVNQQGKASVIELAQHCDISVETIRRDLNKLANKGLLHRTHGGAVS) form the HTH deoR-type domain. Residues 18-37 (ASVIELAQHCDISVETIRRD) constitute a DNA-binding region (H-T-H motif).

Transcriptional activator of the fuc operon. The sequence is that of L-fucose operon activator (fucR) from Haemophilus influenzae (strain ATCC 51907 / DSM 11121 / KW20 / Rd).